Here is a 206-residue protein sequence, read N- to C-terminus: Uridine kinase (206 aa).

9–16 (GGSGSGKT) serves as a coordination point for ATP.

It belongs to the uridine kinase family.

It is found in the cytoplasm. The catalysed reaction is uridine + ATP = UMP + ADP + H(+). It carries out the reaction cytidine + ATP = CMP + ADP + H(+). Its pathway is pyrimidine metabolism; CTP biosynthesis via salvage pathway; CTP from cytidine: step 1/3. The protein operates within pyrimidine metabolism; UMP biosynthesis via salvage pathway; UMP from uridine: step 1/1. This Borrelia garinii subsp. bavariensis (strain ATCC BAA-2496 / DSM 23469 / PBi) (Borreliella bavariensis) protein is Uridine kinase.